A 188-amino-acid polypeptide reads, in one-letter code: Elongation factor P-like protein (188 aa).

It belongs to the elongation factor P family.

In Xanthomonas campestris pv. campestris (strain 8004), this protein is Elongation factor P-like protein.